The chain runs to 996 residues: Protein psiR (996 aa).

The N-terminal stretch at methionine 1–serine 21 is a signal peptide. 9 N-linked (GlcNAc...) asparagine glycosylation sites follow: asparagine 79, asparagine 117, asparagine 323, asparagine 396, asparagine 428, asparagine 474, asparagine 500, asparagine 645, and asparagine 779. The PA14 domain maps to glutamine 105 to aspartate 250.

It belongs to the prespore-cell-inducing factor family.

It is found in the secreted. This is Protein psiR (psiR) from Dictyostelium discoideum (Social amoeba).